Here is a 130-residue protein sequence, read N- to C-terminus: Small ribosomal subunit protein uS9 (130 aa).

This sequence belongs to the universal ribosomal protein uS9 family.

The chain is Small ribosomal subunit protein uS9 from Hamiltonella defensa subsp. Acyrthosiphon pisum (strain 5AT).